The following is a 119-amino-acid chain: Large ribosomal subunit protein bL12 (119 aa).

This sequence belongs to the bacterial ribosomal protein bL12 family. In terms of assembly, homodimer. Part of the ribosomal stalk of the 50S ribosomal subunit. Forms a multimeric L10(L12)X complex, where L10 forms an elongated spine to which 2 to 4 L12 dimers bind in a sequential fashion. Binds GTP-bound translation factors.

Forms part of the ribosomal stalk which helps the ribosome interact with GTP-bound translation factors. Is thus essential for accurate translation. The sequence is that of Large ribosomal subunit protein bL12 from Lysinibacillus sphaericus (strain C3-41).